A 253-amino-acid polypeptide reads, in one-letter code: Small ribosomal subunit protein uS3 (253 aa).

The KH type-2 domain occupies 39–109 (IRNYVLARLK…EVKIDVVEVI (71 aa)). Residues 220 to 253 (DEMKKMKDRRNDGGAKGRDSRDNRSKRRSRSKRS) form a disordered region. Residues 221–242 (EMKKMKDRRNDGGAKGRDSRDN) show a composition bias toward basic and acidic residues. Residues 243–253 (RSKRRSRSKRS) are compositionally biased toward basic residues.

It belongs to the universal ribosomal protein uS3 family. In terms of assembly, part of the 30S ribosomal subunit. Forms a tight complex with proteins S10 and S14.

Its function is as follows. Binds the lower part of the 30S subunit head. Binds mRNA in the 70S ribosome, positioning it for translation. This Chlorobium chlorochromatii (strain CaD3) protein is Small ribosomal subunit protein uS3.